A 358-amino-acid chain; its full sequence is Histidinol-phosphate aminotransferase (358 aa).

K218 is modified (N6-(pyridoxal phosphate)lysine).

Belongs to the class-II pyridoxal-phosphate-dependent aminotransferase family. Histidinol-phosphate aminotransferase subfamily. Homodimer. It depends on pyridoxal 5'-phosphate as a cofactor.

The catalysed reaction is L-histidinol phosphate + 2-oxoglutarate = 3-(imidazol-4-yl)-2-oxopropyl phosphate + L-glutamate. Its pathway is amino-acid biosynthesis; L-histidine biosynthesis; L-histidine from 5-phospho-alpha-D-ribose 1-diphosphate: step 7/9. The protein is Histidinol-phosphate aminotransferase of Dehalococcoides mccartyi (strain CBDB1).